We begin with the raw amino-acid sequence, 169 residues long: Cell cycle link protein (169 aa).

The segment at 9 to 22 (LPEELRQKIVHDHL) is binding to host SKP1 protein. Positions 110 to 114 (LLCRE) match the LXCXE motif, interaction with host RBR motif.

Belongs to the nanovirus Clink protein family. In terms of assembly, interacts with host SKP1. Interacts (via LXCXE domain) with host retinoblastoma-related protein 1 (RBR1). Interacts (via LXCXE domain) with retinoblastoma-related proteins (RBR).

Functionally, interacts with and disrupts the function of host retinoblastoma-related proteins RBR, which are key regulators of the cell cycle. Induces transcriptional activation of E2F-regulated S-phase and G2/M-phase-specific genes. Inactivation of the ability of RBR to arrest the cell cycle leads to the stimulation of viral DNA replication. The chain is Cell cycle link protein (DNA-C) from Cicer arietinum (Chickpea).